The primary structure comprises 312 residues: Tetraacyldisaccharide 4'-kinase (312 aa).

An ATP-binding site is contributed by Ile-60 to Thr-67.

This sequence belongs to the LpxK family.

It catalyses the reaction a lipid A disaccharide + ATP = a lipid IVA + ADP + H(+). The protein operates within glycolipid biosynthesis; lipid IV(A) biosynthesis; lipid IV(A) from (3R)-3-hydroxytetradecanoyl-[acyl-carrier-protein] and UDP-N-acetyl-alpha-D-glucosamine: step 6/6. Transfers the gamma-phosphate of ATP to the 4'-position of a tetraacyldisaccharide 1-phosphate intermediate (termed DS-1-P) to form tetraacyldisaccharide 1,4'-bis-phosphate (lipid IVA). The chain is Tetraacyldisaccharide 4'-kinase from Helicobacter pylori (strain J99 / ATCC 700824) (Campylobacter pylori J99).